Reading from the N-terminus, the 231-residue chain is Enolase-phosphatase E1 (231 aa).

This sequence belongs to the HAD-like hydrolase superfamily. MasA/MtnC family. As to quaternary structure, monomer. The cofactor is Mg(2+).

It catalyses the reaction 5-methylsulfanyl-2,3-dioxopentyl phosphate + H2O = 1,2-dihydroxy-5-(methylsulfanyl)pent-1-en-3-one + phosphate. It functions in the pathway amino-acid biosynthesis; L-methionine biosynthesis via salvage pathway; L-methionine from S-methyl-5-thio-alpha-D-ribose 1-phosphate: step 3/6. Its pathway is amino-acid biosynthesis; L-methionine biosynthesis via salvage pathway; L-methionine from S-methyl-5-thio-alpha-D-ribose 1-phosphate: step 4/6. Functionally, bifunctional enzyme that catalyzes the enolization of 2,3-diketo-5-methylthiopentyl-1-phosphate (DK-MTP-1-P) into the intermediate 2-hydroxy-3-keto-5-methylthiopentenyl-1-phosphate (HK-MTPenyl-1-P), which is then dephosphorylated to form the acireductone 1,2-dihydroxy-3-keto-5-methylthiopentene (DHK-MTPene). The chain is Enolase-phosphatase E1 from Granulibacter bethesdensis (strain ATCC BAA-1260 / CGDNIH1).